Consider the following 448-residue polypeptide: Allantoinase (448 aa).

Histidine 60, histidine 62, lysine 147, histidine 183, histidine 239, and aspartate 312 together coordinate Zn(2+). Lysine 147 carries the N6-carboxylysine modification.

This sequence belongs to the metallo-dependent hydrolases superfamily. Allantoinase family. Homotetramer. The cofactor is Zn(2+). Carboxylation allows a single lysine to coordinate two zinc ions.

It carries out the reaction (S)-allantoin + H2O = allantoate + H(+). Its pathway is nitrogen metabolism; (S)-allantoin degradation; allantoate from (S)-allantoin: step 1/1. Functionally, catalyzes the conversion of allantoin (5-ureidohydantoin) to allantoic acid by hydrolytic cleavage of the five-member hydantoin ring. This is Allantoinase from Deinococcus radiodurans (strain ATCC 13939 / DSM 20539 / JCM 16871 / CCUG 27074 / LMG 4051 / NBRC 15346 / NCIMB 9279 / VKM B-1422 / R1).